A 548-amino-acid polypeptide reads, in one-letter code: MDSQRNLLVIALLFVSFMIWQAWEQDKNPQPQTQQTTQTTTTAAGSAADQGVPASGQGKLITVKTDVLDLTINTRGGDVEQALLPAYPKELGSSEPFQLLETTPQFIYQAQSGLTGRDGPDNPANGPRPLYNVEKDAFVLADGQNELQVPMTYTDAAGNTFTKTFVFKRGDYAVNVNYSVQNTGEKPLEISTFGQLKQSINLPPHRDTGSSNFALHTFRGAAYSTPDEKYEKYKFDTIADNENLNVSSKGGWVAMLQQYFATAWIPRNDGTNNFYTANLGNGIVAIGYKAQPVLVQPGQTGAMTSTLWVGPEIQDKMAAVAPHLDLTVDYGWLWFISQPLFKLLKWIHSFVGNWGFSIIIITFIVRGIMYPLTKAQYTSMAKMRMLQPKIQAMRERLGDDKQRQSQEMMALYKAEKVNPLGGCFPLIIQMPIFLALYYMLMGSIELRHAPFALWIHDLSAQDPYYILPILMGVTMFFIQKMSPTTVTDPMQQKIMTFMPVIFTVFFLWFPSGLVLYYIVSNLVTIIQQQLIYRGLEKRGLHSREKKNS.

The chain crosses the membrane as a helical span at residues 6-26 (NLLVIALLFVSFMIWQAWEQD). The segment at 28 to 54 (NPQPQTQQTTQTTTTAAGSAADQGVPA) is disordered. Residues 29 to 42 (PQPQTQQTTQTTTT) show a composition bias toward low complexity. The next 4 membrane-spanning stretches (helical) occupy residues 350 to 370 (FVGNWGFSIIIITFIVRGIMY), 424 to 444 (FPLIIQMPIFLALYYMLMGSI), 458 to 478 (LSAQDPYYILPILMGVTMFFI), and 499 to 519 (PVIFTVFFLWFPSGLVLYYIV).

Belongs to the OXA1/ALB3/YidC family. Type 1 subfamily. In terms of assembly, interacts with the Sec translocase complex via SecD. Specifically interacts with transmembrane segments of nascent integral membrane proteins during membrane integration.

It localises to the cell inner membrane. In terms of biological role, required for the insertion and/or proper folding and/or complex formation of integral membrane proteins into the membrane. Involved in integration of membrane proteins that insert both dependently and independently of the Sec translocase complex, as well as at least some lipoproteins. Aids folding of multispanning membrane proteins. The protein is Membrane protein insertase YidC of Salmonella arizonae (strain ATCC BAA-731 / CDC346-86 / RSK2980).